A 704-amino-acid polypeptide reads, in one-letter code: Metabotropic glutamate receptor-like protein K (704 aa).

Positions 1-21 are cleaved as a signal peptide; sequence MIKLILSIILIICFIINSIES. The Extracellular portion of the chain corresponds to 22–383; that stretch reads FKMITLTTGP…SKVEFQRSIQ (362 aa). Asparagine 66, asparagine 104, asparagine 256, asparagine 286, asparagine 308, asparagine 337, asparagine 343, and asparagine 368 each carry an N-linked (GlcNAc...) asparagine glycan. Residues 384 to 404 traverse the membrane as a helical segment; it reads IGFSIVSGLLIGFVILMMIGI. The Cytoplasmic portion of the chain corresponds to 405 to 419; sequence VKYQDTPSIRSASPS. The helical transmembrane segment at 420–440 threads the bilayer; sequence FLNLTLLGGVIIFIGIIVWVA. The Extracellular segment spans residues 441-455; sequence PISTHQCNARFWLVT. A helical transmembrane segment spans residues 456–476; it reads IGFSTLIGSLVVKNIRIWLIF. Residues 477–492 lie on the Cytoplasmic side of the membrane; sequence DNPELKIRTITNNQLY. A helical membrane pass occupies residues 493 to 513; sequence PWVGLCLVINIVLMSIITTVG. The Extracellular portion of the chain corresponds to 514 to 541; the sequence is DLKAIEAQGIDSLGKFEYMTICKMNYTG. A glycan (N-linked (GlcNAc...) asparagine) is linked at asparagine 538. A helical transmembrane segment spans residues 542-562; sequence AATLYSILAYFGTLLLVGVFV. Topologically, residues 563-578 are cytoplasmic; it reads SWKIRIVHIEEFSECT. Residues 579–599 form a helical membrane-spanning segment; sequence AIAKTLYSISFCLFVIVPLMI. The Extracellular portion of the chain corresponds to 600 to 608; it reads SPQDKQSET. A helical transmembrane segment spans residues 609–629; that stretch reads IILCVTGIFITTGALLIFFLP. The Cytoplasmic portion of the chain corresponds to 630–704; that stretch reads KFWRIFGNEK…NESSLSNETK (75 aa). 2 disordered regions span residues 657 to 677 and 685 to 704; these read ARAE…SKSS and SGIE…NETK.

In the N-terminal section; belongs to the BMP lipoprotein family. It in the C-terminal section; belongs to the G-protein coupled receptor 3 family. GABA-B receptor subfamily.

It is found in the membrane. The chain is Metabotropic glutamate receptor-like protein K (grlK) from Dictyostelium discoideum (Social amoeba).